Reading from the N-terminus, the 816-residue chain is MESRVLLRTFCLIFGLGAVWGLGVDPSLQIDVLTELELGESTTGVRQVPGLHNGTKAFLFQDTPRSIKASTATAEQFFQKLRNKHEFTILVTLKQTHLNSGVILSIHHLDHRYLELESSGHRNEVRLHYRSGSHRPHTEVFPYILADDKWHKLSLAISASHLILHIDCNKIYERVVEKPSTDLPLGTTFWLGQRNNAHGYFKGIMQDVQLLVMPQGFIAQCPDLNRTCPTCNDFHGLVQKIMELQDILAKTSAKLSRAEQRMNRLDQCYCERTCTMKGTTYREFESWIDGCKNCTCLNGTIQCETLICPNPDCPLKSALAYVDGKCCKECKSICQFQGRTYFEGERNTVYSSSGVCVLYECKDQTMKLVESSGCPALDCPESHQITLSHSCCKVCKGYDFCSERHNCMENSICRNLNDRAVCSCRDGFRALREDNAYCEDIDECAEGRHYCRENTMCVNTPGSFMCICKTGYIRIDDYSCTEHDECITNQHNCDENALCFNTVGGHNCVCKPGYTGNGTTCKAFCKDGCRNGGACIAANVCACPQGFTGPSCETDIDECSDGFVQCDSRANCINLPGWYHCECRDGYHDNGMFSPSGESCEDIDECGTGRHSCANDTICFNLDGGYDCRCPHGKNCTGDCIHDGKVKHNGQIWVLENDRCSVCSCQNGFVMCRRMVCDCENPTVDLFCCPECDPRLSSQCLHQNGETLYNSGDTWVQNCQQCRCLQGEVDCWPLPCPDVECEFSILPENECCPRCVTDPCQADTIRNDITKTCLDEMNVVRFTGSSWIKHGTECTLCQCKNGHICCSVDPQCLQEL.

The signal sequence occupies residues 1 to 21; sequence MESRVLLRTFCLIFGLGAVWG. N-linked (GlcNAc...) asparagine glycosylation is found at N53, N225, N293, and N298. The Laminin G-like domain occupies 64–228; it reads PRSIKASTAT…AQCPDLNRTC (165 aa). In terms of domain architecture, VWFC 1 spans 272–331; it reads RTCTMKGTTYREFESWIDGCKNCTCLNGTIQCETLICPNPDCPLKSALAYVDGKCCKECK. The region spanning 397–439 is the EGF-like 1 domain; sequence GYDFCSERHNCMENSICRNLNDRAVCSCRDGFRALREDNAYCE. 3 disulfides stabilise this stretch: C401–C413, C407–C422, and C424–C438. 3 residues coordinate Ca(2+): D440, I441, and E443. Residues 440 to 481 form the EGF-like 2; calcium-binding domain; sequence DIDECAEGRHYCRENTMCVNTPGSFMCICKTGYIRIDDYSCT. 9 cysteine pairs are disulfide-bonded: C444/C457, C451/C466, C468/C480, C486/C499, C493/C508, C510/C521, C525/C535, C529/C541, and C543/C552. Ca(2+)-binding residues include N459, T460, and S463. The region spanning 482-522 is the EGF-like 3; calcium-binding domain; the sequence is EHDECITNQHNCDENALCFNTVGGHNCVCKPGYTGNGTTCK. N517 carries an N-linked (GlcNAc...) asparagine glycan. The 31-residue stretch at 523-553 folds into the EGF-like 4 domain; the sequence is AFCKDGCRNGGACIAANVCACPQGFTGPSCE. T548 carries O-linked (GlcNAc...) threonine glycosylation. 3 residues coordinate Ca(2+): D555, I556, and E558. The region spanning 555-601 is the EGF-like 5; calcium-binding domain; it reads DIDECSDGFVQCDSRANCINLPGWYHCECRDGYHDNGMFSPSGESCE. 3 disulfide bridges follow: C559/C572, C566/C581, and C583/C600. Residues N574, L575, and W578 each contribute to the Ca(2+) site. The Ca(2+) site is built by D602, I603, and E605. The 36-residue stretch at 602–637 folds into the EGF-like 6; calcium-binding domain; the sequence is DIDECGTGRHSCANDTICFNLDGGYDCRCPHGKNCT. 3 cysteine pairs are disulfide-bonded: C606/C619, C613/C628, and C630/C636. N615 is a glycosylation site (N-linked (GlcNAc...) asparagine). N621, L622, and G625 together coordinate Ca(2+). N635 carries an N-linked (GlcNAc...) asparagine glycan. VWFC domains follow at residues 638–693 and 698–756; these read GDCI…PECD and SQCL…PRCV.

Homotrimer. Binds to PRKCB. Interacts with NICOL1; this interaction triggers epididymal differentiation. Interacts (via the EGF domains) with ROBO3 (via Fibronectin type-III 1 domain) with a 3:3 stoichiometry; this interaction promotes oligomerization of ROBO3 resulting in the repulsion of commissural axons in the midline.

The protein resides in the secreted. Functionally, plays multiple roles in neural tissues, regulates neuronal proliferation, survival, differentiation, polarization, as well as axon guidance and synaptic functions. Plays an important role in axon development during neuronal differentiation through the MAPK intracellular signaling pathway. Via binding to its receptor ROBO3, plays a role in axon guidance, functioning as a repulsive axon guidance cue that contributes to commissural axon guidance to the midline. Required for neuron survival through the modulation of MAPK signaling pathways too. Involved in the regulation of hypothalamic GNRH secretion and the control of puberty. In terms of biological role, epididymal-secreted protein that signals through a ROS1-pathway to regulate the epididymal initial segment (IS) maturation, sperm maturation and male fertility. This Homo sapiens (Human) protein is Protein kinase C-binding protein NELL2.